Reading from the N-terminus, the 148-residue chain is IQ domain-containing protein F5 (148 aa).

IQ domains follow at residues 11–40 (ERSAAVFIQAWWRGMLVRRTLLHAALRAWI) and 67–96 (QEWAAVRLQSWVRMWCVRQRYCRLLNAVRI).

The sequence is that of IQ domain-containing protein F5 (IQCF5) from Homo sapiens (Human).